A 290-amino-acid chain; its full sequence is ATP synthase gamma chain (290 aa).

The protein belongs to the ATPase gamma chain family. As to quaternary structure, F-type ATPases have 2 components, CF(1) - the catalytic core - and CF(0) - the membrane proton channel. CF(1) has five subunits: alpha(3), beta(3), gamma(1), delta(1), epsilon(1). CF(0) has four main subunits: a, b, b' and c.

It localises to the cellular chromatophore membrane. Produces ATP from ADP in the presence of a proton gradient across the membrane. The gamma chain is believed to be important in regulating ATPase activity and the flow of protons through the CF(0) complex. In Rhodobacter capsulatus (Rhodopseudomonas capsulata), this protein is ATP synthase gamma chain.